The sequence spans 288 residues: Polyprenyl transferase eriF (288 aa).

6 helical membrane-spanning segments follow: residues 24-44 (ASII…TLPL), 51-71 (YIFL…LNQV), 101-121 (IAAF…LPET), 145-165 (CIAM…AISP), 215-235 (FIIT…GGIF), and 268-288 (FYTY…HGLI).

Belongs to the UbiA prenyltransferase family. Mg(2+) serves as cofactor.

It is found in the membrane. In terms of biological role, polyprenyl transferase; part of the gene cluster that mediates the biosynthesis of erinacines, cyathane-xylosides that show unique biological activities, including leishmanicidal activity, stimulating activity for nerve growth-factor synthesis, and agonistic activity toward the kappa opioid receptor. The role of eriF within the pathway has still to be determined. The first step of the erinacines biosynthesis pathway is catalyzed by the geranylgeranyl diphosphate (GGPP) synthase eriE via conversion of farnesyl pyrophosphate and isopentyl pyrophosphate into geranylgeranyl pyrophosphate (GGPP). GGPP is then substrate of the diterpene cyclase eriG for the production of cyatha-3,12-diene. The cytochrome P450 monooxygenase eriI then hydroxylates cyatha-3,12-diene at C-14 of the seven-membered ring to produce erinacol, which is further hydroxylated at C-15 by the cytochrome P450 monooxygenase eriC to yield cyathadiol. The cytochrome P450 monooxygenase eriA then catalyzes C-11 hydroxylation in the presence of the short chain dehydrogenase/reductase (SDR) eriH, which leads to the production of cyathatriol. The acetyltransferase eriL converts cyathatriol into 11-O-acetyl-cyathatriol. The SDR eriH catalyzes further oxidation of 11-O-acetyl-cyathatriol into 1-O-acetylcyathin A3. Finally, the glycosyl transferase eriJ tranfers xylose from UDP-xylose onto C-14 of 11-O-acetyl-cyathatriol to form eracine Q. EriJ is also able to convert 11-O-acetyl-cyathatriol to eracine Q2 by using UDP-D-glucose as cosubstrate, but at a lower rate. The sequence is that of Polyprenyl transferase eriF from Hericium erinaceus (Lion's mane mushroom).